Reading from the N-terminus, the 286-residue chain is Undecaprenyl-diphosphatase (286 aa).

Helical transmembrane passes span 50 to 70 (PGVSVTAVIQLGSIVAVIAYF), 97 to 117 (LGIAMTIGTLPILFAGLAIKL), 127 to 147 (LRSVPAIAGVSILMALLLALA), 165 to 185 (GLLVGLAQVLALIPGVSRSGS), 200 to 220 (AARFSFLLGIPAITIAGLVEL), 230 to 250 (GGVLPLMVGIVSAAVVSWLAI), and 262 to 282 (TWVFVIYRLLFGILLLAWWAG).

Belongs to the UppP family.

It is found in the cell inner membrane. The enzyme catalyses di-trans,octa-cis-undecaprenyl diphosphate + H2O = di-trans,octa-cis-undecaprenyl phosphate + phosphate + H(+). Catalyzes the dephosphorylation of undecaprenyl diphosphate (UPP). Confers resistance to bacitracin. This Synechococcus sp. (strain WH7803) protein is Undecaprenyl-diphosphatase.